The primary structure comprises 215 residues: Peroxiredoxin (215 aa).

In terms of domain architecture, Thioredoxin spans 6-161 (PLIGEEFPRL…ILRAVRALQT (156 aa)). The active-site Cysteine sulfenic acid (-SOH) intermediate is the C48. R124 contacts substrate. C205 and C211 are oxidised to a cystine.

This sequence belongs to the peroxiredoxin family. Prx6 subfamily. Homodecamer. Pentamer of dimers that assemble into a ring structure.

The protein localises to the cytoplasm. It catalyses the reaction a hydroperoxide + [thioredoxin]-dithiol = an alcohol + [thioredoxin]-disulfide + H2O. Thiol-specific peroxidase that catalyzes the reduction of hydrogen peroxide and organic hydroperoxides to water and alcohols, respectively. Plays a role in cell protection against oxidative stress by detoxifying peroxides. This Thermotoga petrophila (strain ATCC BAA-488 / DSM 13995 / JCM 10881 / RKU-1) protein is Peroxiredoxin.